The sequence spans 119 residues: Albumin-1 (119 aa).

Residues 1 to 19 (MAVFLLATSTIMFPTKIEA) form the signal peptide. Disulfide bonds link Cys22/Cys39, Cys26/Cys41, and Cys34/Cys51. 2 consecutive propeptides follow at residues 57-64 (LSSVAKMI) and 117-119 (TTK).

The C-terminal glycine may be removed from A1b.

In terms of biological role, A1b binds to basic 7S globulin (BG) and stimulates its phosphorylation activity. Involved in the signal transduction system to regulate the growth and differentiation as a hormone peptide. In Glycine max (Soybean), this protein is Albumin-1.